Here is a 145-residue protein sequence, read N- to C-terminus: Large ribosomal subunit protein uL16 (145 aa).

The protein belongs to the universal ribosomal protein uL16 family. Part of the 50S ribosomal subunit.

Its function is as follows. Binds 23S rRNA and is also seen to make contacts with the A and possibly P site tRNAs. The sequence is that of Large ribosomal subunit protein uL16 from Exiguobacterium sp. (strain ATCC BAA-1283 / AT1b).